We begin with the raw amino-acid sequence, 660 residues long: Acetyl-coenzyme A synthetase (660 aa).

CoA contacts are provided by residues 197-200 (RGGK) and Thr-317. Residues 397–399 (GEP), 421–426 (DTFWQT), Asp-512, and Arg-528 contribute to the ATP site. CoA is bound at residue Ser-536. Residue Arg-539 coordinates ATP. Positions 550 and 555 each coordinate Mg(2+). Position 625 is an N6-acetyllysine (Lys-625).

The protein belongs to the ATP-dependent AMP-binding enzyme family. Requires Mg(2+) as cofactor. Post-translationally, acetylated. Deacetylation by the SIR2-homolog deacetylase activates the enzyme.

The catalysed reaction is acetate + ATP + CoA = acetyl-CoA + AMP + diphosphate. Its function is as follows. Catalyzes the conversion of acetate into acetyl-CoA (AcCoA), an essential intermediate at the junction of anabolic and catabolic pathways. AcsA undergoes a two-step reaction. In the first half reaction, AcsA combines acetate with ATP to form acetyl-adenylate (AcAMP) intermediate. In the second half reaction, it can then transfer the acetyl group from AcAMP to the sulfhydryl group of CoA, forming the product AcCoA. The protein is Acetyl-coenzyme A synthetase of Ralstonia pickettii (strain 12J).